Reading from the N-terminus, the 436-residue chain is Xylose isomerase (436 aa).

Mg(2+) contacts are provided by aspartate 306 and aspartate 308.

Belongs to the xylose isomerase family. In terms of assembly, homotetramer. It depends on Mg(2+) as a cofactor.

Its subcellular location is the cytoplasm. It carries out the reaction alpha-D-xylose = alpha-D-xylulofuranose. The sequence is that of Xylose isomerase from Rhizobium rhizogenes (strain K84 / ATCC BAA-868) (Agrobacterium radiobacter).